Consider the following 176-residue polypeptide: Cytidylate kinase (176 aa).

An ATP-binding site is contributed by 7-15 (GPPGSGTTS).

Belongs to the cytidylate kinase family. Type 2 subfamily.

Its subcellular location is the cytoplasm. The catalysed reaction is CMP + ATP = CDP + ADP. It carries out the reaction dCMP + ATP = dCDP + ADP. The chain is Cytidylate kinase from Methanosphaerula palustris (strain ATCC BAA-1556 / DSM 19958 / E1-9c).